Reading from the N-terminus, the 173-residue chain is Transcriptional regulator ERG homolog (173 aa).

Residues 1-84 (SGQIQLWQFL…HGKRYAYKFD (84 aa)) constitute a DNA-binding region (ETS).

It belongs to the ETS family.

The protein resides in the nucleus. Its function is as follows. Acts as a transcriptional activator. The chain is Transcriptional regulator ERG homolog (ERG) from Lytechinus variegatus (Green sea urchin).